We begin with the raw amino-acid sequence, 93 residues long: OMEGA-ectatommitoxin(02)-Rm1c (93 aa).

A signal peptide spans 1–30 (MKDSYISIVIAYLMVTFILVSSMPIEGEKG). Disulfide bonds link cysteine 39-cysteine 52, cysteine 47-cysteine 68, and cysteine 70-cysteine 79. The EGF-like domain maps to 43–80 (YENYCFNGKCVHVVAQDEPGKPCYSCICDEFYIGERCG).

It belongs to the EGF domain peptide family. In terms of tissue distribution, expressed by the venom gland.

The protein resides in the secreted. In terms of biological role, ant peptide with probable defensive activity which acts as a potent agonist of the mammalian epidermal growth factor receptor (EGFR). Mimics, both structurally and functionally, vertebrate epidermal growth factor (EGF) peptide hormones. In vivo, intraplantar injection in mice causes long-lasting (several days) hypersensitivity of the injected paw to both mechanical and thermal stimuli. Its long-lasting effect is unusual for venom toxins whose effects are usually immediate. One possible explanation is that it would reduce the duration of a nest attack, discourage future attacks, or enhance the actions of subsequent exposure to other pain-inducing venom peptides. This Rhytidoponera metallica (Australian green-headed ant) protein is OMEGA-ectatommitoxin(02)-Rm1c.